Here is a 532-residue protein sequence, read N- to C-terminus: Flavin-containing monooxygenase 3 (532 aa).

FAD-binding positions include 9–13 (GAGVS), Glu32, 40–41 (LW), and 61–62 (NS). Residues 60–61 (TN) and 195–198 (SGCD) contribute to the NADP(+) site. The residue at position 401 (Ser401) is a Phosphoserine. Residues 510–530 (FFFHWLKPFAIPILLIAVFLG) form a helical membrane-spanning segment.

Belongs to the FMO family. The cofactor is FAD. As to expression, liver.

The protein localises to the microsome membrane. It localises to the endoplasmic reticulum membrane. The catalysed reaction is trimethylamine + NADPH + O2 = trimethylamine N-oxide + NADP(+) + H2O. It carries out the reaction N,N-dimethylaniline + NADPH + O2 + H(+) = N,N-dimethylaniline N-oxide + NADP(+) + H2O. The enzyme catalyses hypotaurine + NADPH + O2 + H(+) = taurine + NADP(+) + H2O. It catalyses the reaction (S)-nicotine + NADPH + O2 = trans-(S)-nicotine N(1')-oxide + NADP(+) + H2O. The catalysed reaction is albendazole + NADPH + O2 + H(+) = albendazole S-oxide + NADP(+) + H2O. Essential hepatic enzyme that catalyzes the oxygenation of a wide variety of nitrogen- and sulfur-containing compounds including drugs as well as dietary compounds. Plays an important role in the metabolism of trimethylamine (TMA), via the production of trimethylamine N-oxide (TMAO) metabolite. TMA is generated by the action of gut microbiota using dietary precursors such as choline, choline containing compounds, betaine or L-carnitine. By regulating TMAO concentration, FMO3 directly impacts both platelet responsiveness and rate of thrombus formation. This is Flavin-containing monooxygenase 3 (FMO3) from Macaca mulatta (Rhesus macaque).